Here is a 249-residue protein sequence, read N- to C-terminus: Type I iodothyronine deiodinase (249 aa).

At 1–12 (MGLPQPGLWLKR) the chain is on the extracellular side. Residues 13–33 (LWVLLEVAVHVVVGKVLLILF) form a helical; Signal-anchor for type III membrane protein membrane-spanning segment. The Cytoplasmic portion of the chain corresponds to 34–249 (PDRVKRNILA…VRAVLEKLHS (216 aa)). U126 is a catalytic residue. Position 126 (U126) is a non-standard amino acid, selenocysteine.

It belongs to the iodothyronine deiodinase family. Predominantly monomer. Can form homodimers but homodimerization is not essential for enzyme activity.

It localises to the cell membrane. Its subcellular location is the endoplasmic reticulum membrane. The protein resides in the basolateral cell membrane. It catalyses the reaction 3,3',5-triiodo-L-thyronine + iodide + A + H(+) = L-thyroxine + AH2. It carries out the reaction 3,3',5'-triiodo-L-thyronine + iodide + A + H(+) = L-thyroxine + AH2. The catalysed reaction is 3,3'-diiodo-L-thyronine + iodide + A + H(+) = 3,3',5'-triiodo-L-thyronine + AH2. The enzyme catalyses 3,3'-diiodo-L-thyronine + iodide + A + H(+) = 3,3',5-triiodo-L-thyronine + AH2. It catalyses the reaction 3'-iodo-L-thyronine + iodide + A + H(+) = 3',5'-diiodo-L-thyronine + AH2. It carries out the reaction 3-iodo-L-thyronine + iodide + A + H(+) = 3,5-diiodo-L-thyronine + AH2. The catalysed reaction is 3-iodo-L-thyronine + iodide + A + H(+) = 3,3'-diiodo-L-thyronine + AH2. The enzyme catalyses 3,3'-diiodothyronamine + iodide + A + H(+) = 3,3',5'-triiodothyronamine + AH2. It catalyses the reaction 3'-iodothyronamine + iodide + A + H(+) = 3',5'-diiodothyronamine + AH2. It carries out the reaction 3-iodothyronamine + iodide + A + H(+) = 3,3'-diiodothyronamine + AH2. The catalysed reaction is 3,3'-diiodothyronamine + iodide + A + H(+) = 3,3',5-triiodothyronamine + AH2. The enzyme catalyses 3-iodothyronamine + iodide + A + H(+) = 3,5-diiodothyronamine + AH2. It catalyses the reaction 3,3'-diiodo-L-thyronine sulfate + iodide + A + H(+) = 3,3',5'-triiodo-L-thyronine sulfate + AH2. It carries out the reaction 3,3',5'-triiodo-L-thyronine sulfate + iodide + A + H(+) = L-thyroxine sulfate + AH2. The catalysed reaction is 3,3'-diiodo-L-thyronine sulfate + iodide + A + H(+) = 3,3',5-triiodo-L-thyronine sulfate + AH2. Its activity is regulated as follows. Deiodination of substrates 3,3',5'-triiodothyronine, 3,3',5'-triiodothyronamine and 3',5'- diiodothyronamine are inhibited by 6n-propyl-2-thiouracil (PTU). In terms of biological role, plays a crucial role in the metabolism of thyroid hormones (TH) and has specific roles in TH activation and inactivation by deiodination. Catalyzes the deiodination of L-thyroxine (T4) to 3,5,3'-triiodothyronine (T3), 3,3',5'-triiodothyronine (rT3) to 3,3'-diiodothyronine (3,3'-T2) and 3',5'-diiodothyronine (3',5'-T2) to 3'-monoiodothyronine (3'-T1) via outer-ring deiodination (ORD). Catalyzes the deiodination of T4 to 3,3',5'-triiodothyronine (rT3) via inner-ring deiodination (IRD). Catalyzes the deiodination of T3 to 3,3'-T2, 3,5-diiodothyronine (3,5-T2) to 3- monoiodothyronine (3-T1) and 3,3'-T2 to 3-T1 via IRD. Catalyzes the phenolic ring deiodinations of 3,3',5'-triiodothyronamine and 3',5'-diiodothyronamine. Catalyzes the phenolic ring deiodination of 3,3'-diiodothyronamine and tyrosyl ring deiodinations of 3,5,3'-triiodothyronamine and 3,5-diiodothyronamine. Catalyzes the deiodination of L-thyroxine sulfate and 3,3',5-triiodo-L-thyronine sulfate via IRD and of 3,3',5'-triiodo-L-thyronine sulfate via ORD. This Homo sapiens (Human) protein is Type I iodothyronine deiodinase (DIO1).